A 521-amino-acid polypeptide reads, in one-letter code: Non-specific phospholipase C5 (521 aa).

The segment covering 478–487 (SKKARERGGD) has biased composition (basic and acidic residues). Positions 478 to 521 (SKKARERGGDENDIVFCVDDDDDHNVVKPPPSQSEPSHATPWSN) are disordered. Residues 511-521 (SEPSHATPWSN) show a composition bias toward polar residues.

This sequence belongs to the bacterial phospholipase C family. As to expression, specifically expressed in flowers.

The protein resides in the cytoplasm. Its subcellular location is the cytosol. The enzyme catalyses a 1,2-diacyl-sn-glycero-3-phosphocholine + H2O = phosphocholine + a 1,2-diacyl-sn-glycerol + H(+). Non-specific phospholipase C (PLC) which assumes minor PLC activity during inorganic phosphate starvation. Can hydrolyze both phosphatidylcholine (PC) and phosphatidylethanolamine (PE). Required for normal accumulation of digalactosyldiacylglycerol (DGDG) during phosphate limitation and may contribute to the conversion of phospholipids to diacylglycerol, the substrate for galactolipid synthesis. This Arabidopsis thaliana (Mouse-ear cress) protein is Non-specific phospholipase C5 (NPC5).